Reading from the N-terminus, the 145-residue chain is MAARQIWARTGAALCRQPSAAPPPAPLWVRAGFRQQLSLTLCPANEGNCGGSAPSTPGRPERAARPSVSEELTAAERQIAELHAAACAAGQLNYVDPATGYVVLTQIAHLQRGECCGSACRHCPYGQVNVKDPSKKKQFNSYFYV.

Serine 67 carries the phosphoserine modification.

Expressed in retina and retinoblastoma.

This is an uncharacterized protein from Homo sapiens (Human).